Consider the following 509-residue polypeptide: tRNA-2-methylthio-N(6)-dimethylallyladenosine synthase (509 aa).

The interval 1 to 21 (MNEKQRIESGQVNPSDKKSEK) is disordered. Residues 66-184 (RKFYIRTYGC…LPELLSEAYL (119 aa)) form the MTTase N-terminal domain. [4Fe-4S] cluster-binding residues include Cys75, Cys111, Cys145, Cys221, Cys225, and Cys228. The 231-residue stretch at 207 to 437 (RTGKIKGWVN…NEVVNEISAK (231 aa)) folds into the Radical SAM core domain. One can recognise a TRAM domain in the interval 440 to 503 (KEYEGQVVEV…TWSLDGEMVG (64 aa)).

This sequence belongs to the methylthiotransferase family. MiaB subfamily. In terms of assembly, monomer. Requires [4Fe-4S] cluster as cofactor.

It is found in the cytoplasm. It carries out the reaction N(6)-dimethylallyladenosine(37) in tRNA + (sulfur carrier)-SH + AH2 + 2 S-adenosyl-L-methionine = 2-methylsulfanyl-N(6)-dimethylallyladenosine(37) in tRNA + (sulfur carrier)-H + 5'-deoxyadenosine + L-methionine + A + S-adenosyl-L-homocysteine + 2 H(+). In terms of biological role, catalyzes the methylthiolation of N6-(dimethylallyl)adenosine (i(6)A), leading to the formation of 2-methylthio-N6-(dimethylallyl)adenosine (ms(2)i(6)A) at position 37 in tRNAs that read codons beginning with uridine. This is tRNA-2-methylthio-N(6)-dimethylallyladenosine synthase from Bacillus licheniformis (strain ATCC 14580 / DSM 13 / JCM 2505 / CCUG 7422 / NBRC 12200 / NCIMB 9375 / NCTC 10341 / NRRL NRS-1264 / Gibson 46).